We begin with the raw amino-acid sequence, 116 residues long: Nitrogenase-stabilizing/protective protein NifW (116 aa).

It belongs to the NifW family. Homotrimer; associates with NifD.

Functionally, may protect the nitrogenase Fe-Mo protein from oxidative damage. The polypeptide is Nitrogenase-stabilizing/protective protein NifW (Rhodopseudomonas palustris (strain ATCC BAA-98 / CGA009)).